The following is a 74-amino-acid chain: Cell division protein ZapB (74 aa).

Residues Thr-2–Ser-74 adopt a coiled-coil conformation.

This sequence belongs to the ZapB family. As to quaternary structure, homodimer. The ends of the coiled-coil dimer bind to each other, forming polymers. Interacts with FtsZ.

The protein resides in the cytoplasm. Functionally, non-essential, abundant cell division factor that is required for proper Z-ring formation. It is recruited early to the divisome by direct interaction with FtsZ, stimulating Z-ring assembly and thereby promoting cell division earlier in the cell cycle. Its recruitment to the Z-ring requires functional FtsA or ZipA. In Psychromonas ingrahamii (strain DSM 17664 / CCUG 51855 / 37), this protein is Cell division protein ZapB.